We begin with the raw amino-acid sequence, 347 residues long: MTDVPRMVTPERRSDDVGDTVLRPQRLAEFVGQAQARANLQIFIDAARKRKEALDHVLFVGPPGLGKTTLAQIVARELGVGFRATSGPVIAKAGDLAALLTNLEERDVLFIDEIHRLSPAVEEVLYPAMEDFQLDLIIGEGPAARSVKIELSKFTLVGATTRAGLLTNPLRDRFGIPVRLNFYTVDELEKIVSRGARVLDVGMTADGANEIARRARGTPRIAGRLLRRVRDFASAADAASINRKIADHALGALEVDAAGLDAMDRRYLTTIALNYGGGPVGVETMAAALSEPRDAIEDIIEPFLIQCGYLQRTPRGRLLTSHAFRHLGLTEPSRDPSQFGLFGGEDE.

Positions 1–183 (MTDVPRMVTP…FGIPVRLNFY (183 aa)) are large ATPase domain (RuvB-L). ATP contacts are provided by residues L22, R23, G64, K67, T68, T69, 130 to 132 (EDF), R173, Y183, and R220. Residue T68 participates in Mg(2+) binding. The small ATPAse domain (RuvB-S) stretch occupies residues 184-254 (TVDELEKIVS…IADHALGALE (71 aa)). The head domain (RuvB-H) stretch occupies residues 257–347 (AAGLDAMDRR…QFGLFGGEDE (91 aa)). 3 residues coordinate DNA: R293, R312, and R317.

This sequence belongs to the RuvB family. In terms of assembly, homohexamer. Forms an RuvA(8)-RuvB(12)-Holliday junction (HJ) complex. HJ DNA is sandwiched between 2 RuvA tetramers; dsDNA enters through RuvA and exits via RuvB. An RuvB hexamer assembles on each DNA strand where it exits the tetramer. Each RuvB hexamer is contacted by two RuvA subunits (via domain III) on 2 adjacent RuvB subunits; this complex drives branch migration. In the full resolvosome a probable DNA-RuvA(4)-RuvB(12)-RuvC(2) complex forms which resolves the HJ.

It is found in the cytoplasm. The catalysed reaction is ATP + H2O = ADP + phosphate + H(+). Its function is as follows. The RuvA-RuvB-RuvC complex processes Holliday junction (HJ) DNA during genetic recombination and DNA repair, while the RuvA-RuvB complex plays an important role in the rescue of blocked DNA replication forks via replication fork reversal (RFR). RuvA specifically binds to HJ cruciform DNA, conferring on it an open structure. The RuvB hexamer acts as an ATP-dependent pump, pulling dsDNA into and through the RuvAB complex. RuvB forms 2 homohexamers on either side of HJ DNA bound by 1 or 2 RuvA tetramers; 4 subunits per hexamer contact DNA at a time. Coordinated motions by a converter formed by DNA-disengaged RuvB subunits stimulates ATP hydrolysis and nucleotide exchange. Immobilization of the converter enables RuvB to convert the ATP-contained energy into a lever motion, pulling 2 nucleotides of DNA out of the RuvA tetramer per ATP hydrolyzed, thus driving DNA branch migration. The RuvB motors rotate together with the DNA substrate, which together with the progressing nucleotide cycle form the mechanistic basis for DNA recombination by continuous HJ branch migration. Branch migration allows RuvC to scan DNA until it finds its consensus sequence, where it cleaves and resolves cruciform DNA. The polypeptide is Holliday junction branch migration complex subunit RuvB (Nitrobacter hamburgensis (strain DSM 10229 / NCIMB 13809 / X14)).